Here is a 379-residue protein sequence, read N- to C-terminus: Anthranilate O-methyltransferase 3 (379 aa).

A compositionally biased stretch (basic and acidic residues) spans Met-1–His-10. Residues Met-1–Thr-21 form a disordered region. An S-adenosyl-L-homocysteine-binding site is contributed by Tyr-20. An anthranilate-binding site is contributed by Gln-27. S-adenosyl-L-homocysteine contacts are provided by Cys-61, Asn-66, Asp-100, Leu-101, Ser-143, and Phe-144. Anthranilate-binding residues include His-164 and Trp-165. Glu-265 and Phe-267 together coordinate Mg(2+).

Belongs to the methyltransferase superfamily. Type-7 methyltransferase family. SABATH subfamily.

The catalysed reaction is anthranilate + S-adenosyl-L-methionine = O-methyl anthranilate + S-adenosyl-L-homocysteine. It carries out the reaction benzoate + S-adenosyl-L-methionine = methyl benzoate + S-adenosyl-L-homocysteine. The enzyme catalyses salicylate + S-adenosyl-L-methionine = methyl salicylate + S-adenosyl-L-homocysteine. Functionally, methyltransferase involved in the biosynthesis of methyl anthranilate in response to stresses. Utilizes anthranilic acid as substrate. Produces exclusively the O-methyl ester. Can also use benzoic acid as substrate. Low activity with salicylic acid. The sequence is that of Anthranilate O-methyltransferase 3 (AAMT3) from Zea mays (Maize).